Here is a 42-residue protein sequence, read N- to C-terminus: Small, acid-soluble spore protein L (42 aa).

A disordered region spans residues 1–42 (MKKKDKGRLTGGVTPQGDLEGNTHNDPKTELEERAKKSNTKR). The span at 21–36 (GNTHNDPKTELEERAK) shows a compositional bias: basic and acidic residues.

The protein resides in the spore core. In Bacillus subtilis (strain 168), this protein is Small, acid-soluble spore protein L (sspL).